The chain runs to 113 residues: UPF0122 protein LSEI_1603 (113 aa).

This sequence belongs to the UPF0122 family.

Functionally, might take part in the signal recognition particle (SRP) pathway. This is inferred from the conservation of its genetic proximity to ftsY/ffh. May be a regulatory protein. The protein is UPF0122 protein LSEI_1603 of Lacticaseibacillus paracasei (strain ATCC 334 / BCRC 17002 / CCUG 31169 / CIP 107868 / KCTC 3260 / NRRL B-441) (Lactobacillus paracasei).